The following is a 1401-amino-acid chain: Lysine-specific demethylase 6A (1401 aa).

The segment at 1 to 1095 (MKSCGVSLAT…TNIDLSDDKK (1095 aa)) is interaction with SUPT6H. 8 TPR repeats span residues 95 to 128 (SDFF…QSDY), 132 to 165 (AAFL…DPSF), 169 to 203 (KEIH…NPCT), 207 to 240 (AEIQ…ENLS), 245 to 285 (ATIL…DPNS), 286 to 319 (GQSW…SEAS), 321 to 353 (DTWC…DHGH), and 355 to 387 (AAWM…KNCS). Positions 439-453 (AMNTAQQNTSDNWSG) are enriched in polar residues. The interval 439-463 (AMNTAQQNTSDNWSGGNAPPPVEQQ) is disordered. 2 positions are modified to omega-N-methylarginine: Arg-519 and Arg-549. 3 stretches are compositionally biased toward polar residues: residues 596 to 606 (NHVTGSGSNGN), 619 to 642 (HNRT…STQG), and 660 to 743 (LSST…STAS). The disordered stretch occupies residues 596–745 (NHVTGSGSNG…ETPNSTASVE (150 aa)). Residue Ser-769 is modified to Phosphoserine. Disordered stretches follow at residues 795-863 (GTCD…EESQ), 914-941 (LLDK…PPTP), and 1043-1080 (FQES…GPFK). Low complexity predominate over residues 814-833 (SVASSPSSAISTATPSPKST). At Thr-827 the chain carries Phosphothreonine. Ser-829 is modified (phosphoserine). Over residues 834–848 (EQTTTNSVTSLNSPH) the composition is skewed to polar residues. The span at 918 to 931 (CPPPRPPSSPYPPL) shows a compositional bias: pro residues. The segment covering 1046 to 1063 (SLREENEKRSHHKDHSDS) has biased composition (basic and acidic residues). A JmjC domain is found at 1095 to 1258 (KWKLQLHELT…YKLAVERYEW (164 aa)). The Fe cation site is built by His-1146, Glu-1148, and His-1226. Positions 1331, 1334, 1358, and 1361 each coordinate Zn(2+).

The protein belongs to the UTX family. In terms of assembly, component of the MLL2/3 complex (also named ASCOM complex), at least composed of KMT2D/MLL2 or KMT2C/MLL3, ASH2L, RBBP5, WDR5, NCOA6, DPY30, KDM6A (or KDM6B), PAXIP1/PTIP, PAGR1 and alpha- and beta-tubulin. Interacts with TLE1. Interacts with SUPT6H. Interacts with SMARCA4. Interacts with PROSER1. It depends on L-ascorbate as a cofactor. The cofactor is Fe(2+). In terms of tissue distribution, expressed in brain, heart and spleen.

The protein resides in the nucleus. It carries out the reaction N(6),N(6),N(6)-trimethyl-L-lysyl(27)-[histone H3] + 2 2-oxoglutarate + 2 O2 = N(6)-methyl-L-lysyl(27)-[histone H3] + 2 formaldehyde + 2 succinate + 2 CO2. In terms of biological role, histone demethylase that specifically demethylates 'Lys-27' of histone H3, thereby playing a central role in histone code. Demethylates trimethylated and dimethylated but not monomethylated H3 'Lys-27'. Plays a central role in regulation of posterior development, by regulating HOX gene expression. Demethylation of 'Lys-27' of histone H3 is concomitant with methylation of 'Lys-4' of histone H3, and regulates the recruitment of the PRC1 complex and monoubiquitination of histone H2A. Plays a demethylase-independent role in chromatin remodeling to regulate T-box family member-dependent gene expression. The chain is Lysine-specific demethylase 6A (Kdm6a) from Mus musculus (Mouse).